A 378-amino-acid chain; its full sequence is Probable endopolygalacturonase NFIA_008150 (378 aa).

The signal sequence occupies residues 1-19; it reads MLKLIGSLVLLASAAEVIA. The propeptide occupies 20-35; that stretch reads SPLAESVAPSITLEKR. Cysteine 38 and cysteine 56 are oxidised to a cystine. PbH1 repeat units follow at residues 147–169, 170–200, and 201–222; these read TSSS…SING, CDGL…DIGS, and SSNI…AVNS. Residue aspartate 215 is the Proton donor of the active site. Cysteines 217 and 233 form a disulfide. The active site involves histidine 237. 2 PbH1 repeats span residues 247-273 and 281-303; these read RSDN…RIKA and IKGI…LIEQ. Residue asparagine 254 is glycosylated (N-linked (GlcNAc...) asparagine). N-linked (GlcNAc...) asparagine glycosylation occurs at asparagine 327. 2 disulfide bridges follow: cysteine 345/cysteine 350 and cysteine 369/cysteine 378.

The protein belongs to the glycosyl hydrolase 28 family.

Its subcellular location is the secreted. It catalyses the reaction (1,4-alpha-D-galacturonosyl)n+m + H2O = (1,4-alpha-D-galacturonosyl)n + (1,4-alpha-D-galacturonosyl)m.. Functionally, involved in maceration and soft-rotting of plant tissue. Hydrolyzes the 1,4-alpha glycosidic bonds of de-esterified pectate in the smooth region of the plant cell wall. The protein is Probable endopolygalacturonase NFIA_008150 of Neosartorya fischeri (strain ATCC 1020 / DSM 3700 / CBS 544.65 / FGSC A1164 / JCM 1740 / NRRL 181 / WB 181) (Aspergillus fischerianus).